The primary structure comprises 87 residues: Large ribosomal subunit protein eL33 (87 aa).

It belongs to the eukaryotic ribosomal protein eL33 family.

The chain is Large ribosomal subunit protein eL33 from Pyrococcus woesei.